A 131-amino-acid polypeptide reads, in one-letter code: ATP synthase epsilon chain (131 aa).

It belongs to the ATPase epsilon chain family. In terms of assembly, F-type ATPases have 2 components, CF(1) - the catalytic core - and CF(0) - the membrane proton channel. CF(1) has five subunits: alpha(3), beta(3), gamma(1), delta(1), epsilon(1). CF(0) has three main subunits: a, b and c.

The protein localises to the cell membrane. Produces ATP from ADP in the presence of a proton gradient across the membrane. In Bacillus pumilus (strain SAFR-032), this protein is ATP synthase epsilon chain.